Consider the following 399-residue polypeptide: Protein translocase subunit SecD (399 aa).

The next 6 membrane-spanning stretches (helical) occupy residues 7-27 (IKTAFIVIILGIAIWILLTFP), 239-259 (VIGAILVVLFMILVFRFLGLV), 262-282 (IALLIYVVLDLAALKLLNATL), 286-306 (GVAGIILSIGMAVDANCLIFA), 329-351 (ALRAIIDSNVTTILAALILFYFG), and 357-381 (GFAVTLSLGVALSMFTQITITRTLL).

This sequence belongs to the SecD/SecF family. SecD subfamily. As to quaternary structure, forms a complex with SecF. Part of the essential Sec protein translocation apparatus which comprises SecA, SecYEG and auxiliary proteins SecDF. Other proteins may also be involved.

Its subcellular location is the cell inner membrane. Its function is as follows. Part of the Sec protein translocase complex. Interacts with the SecYEG preprotein conducting channel. SecDF uses the proton motive force (PMF) to complete protein translocation after the ATP-dependent function of SecA. The protein is Protein translocase subunit SecD of Dictyoglomus turgidum (strain DSM 6724 / Z-1310).